Consider the following 282-residue polypeptide: B3 domain-containing protein At5g06250 (282 aa).

The TF-B3 DNA-binding region spans 46-159 (FEKSLTPSDV…RLFIGWRRRG (114 aa)).

It is found in the nucleus. The protein is B3 domain-containing protein At5g06250 of Arabidopsis thaliana (Mouse-ear cress).